A 524-amino-acid polypeptide reads, in one-letter code: L-lactate permease (524 aa).

The next 13 helical transmembrane spans lie at 12 to 34 (LAVSAFVAAIPILLLLLCLTVFK), 38 to 60 (IQAALLTLLVTFFIAGLVFHLPF), 67 to 89 (IVQGVVQGLWPIGYIIVMAVWLY), 127 to 149 (LEGAAGFGVPIAICAVLLVSLGF), 156 to 178 (MLCLIANGASGAFGAIGIPVGII), 193 to 215 (SMMTALTLPMINFTIPFLLIWLM), 224 to 246 (ILPAILVTSSVYTVSQALITIFI), 250 to 267 (LADIIPSLLTMGLLALFL), 297 to 319 (WSPFYLLTMFVFLWSLPAFKGLL), 339 to 361 (IEVGVDFIGATGTAILLAAVTTV), 374 to 396 (SLLKKVIVDFSIPIMMICAIIGI), 411 to 433 (EAVATTGAFFPFLSPILGWIGVF), and 505 to 522 (YSFGLLVFVSVWTYILSL).

This sequence belongs to the lactate permease family.

The protein resides in the cell membrane. May play a role in L-lactate transport. In Halalkalibacterium halodurans (strain ATCC BAA-125 / DSM 18197 / FERM 7344 / JCM 9153 / C-125) (Bacillus halodurans), this protein is L-lactate permease (lctP).